Here is a 309-residue protein sequence, read N- to C-terminus: Cutinase (309 aa).

An N-terminal signal peptide occupies residues methionine 1–alanine 47. The Nucleophile role is filled by serine 178. Residues aspartate 224 and histidine 256 each act as charge relay system in the active site. Cysteine 289 and cysteine 305 are oxidised to a cystine.

The protein belongs to the AB hydrolase superfamily.

It is found in the secreted. It catalyses the reaction a carboxylic ester + H2O = an alcohol + a carboxylate + H(+). It carries out the reaction a triacylglycerol + H2O = a diacylglycerol + a fatty acid + H(+). The enzyme catalyses 1,2,3-tri-(9Z-octadecenoyl)-glycerol + H2O = di-(9Z)-octadecenoylglycerol + (9Z)-octadecenoate + H(+). The catalysed reaction is (6-hydroxyhexanoyl)(n) + H2O = (6-hydroxyhexanoyl)(n-1) + 6-hydroxyhexanoate + H(+). It catalyses the reaction cutin + H2O = cutin monomers.. With respect to regulation, no effect on activity by SDS or chelating agents ethylenediaminetetraacetic acid (EDTA) or sodium citrate. No effect on activity by metal ions Ag(+), Ba(2+), Ca(2+), Co(2+), Cu(2+), Mn(2+), Ni(2+), Pb(2+) or Zn(2+). Activated by 1 mM digitonin and sodium deoxycholate, and reducing agents 1 mM 1,4-dithiothreitol, beta-mercaptoethanol and ascorbic acid. Activated by benzene, n-hexane, p-xylene and toluene. Activated by Fe(3+). Inhibited slightly by 1 mM of different chain length fatty acids, and only marginally by 6.0 M urea. Inhibited strongly with chemical modification by reagents phenyl methyl sulfonylfluorid (PMSF), 1-ethyl-3-(3-dimethylaminopropyl) carbodiimide (EDAC), diethylpyrocarbonate (DEPC) and N-bromosuccinimide (NBS). Inhibited by pyridine, DMSO, t-butanol and dodecane. Inhibited by Li(+), Hg(2+) and Mg(2+). No inhibition with chemical modification by reagents N-acetylimidazole (NAI), citraconic anhydride (CA), iodoacetate (IA) and phenylglyoxal (PG). Its function is as follows. Catalyzes the hydrolysis of cutin, a polyester that forms the structure of plant cuticle. Shows esterase activity towards p-nitrophenol-linked aliphatic esters (pNP-aliphatic esters). Has a preference for medium chain length (C-4 to C-12) fatty acid esters. Active with p-nitrophenyl palmitate (p-NPP) as substrate. Hydrolyzes triacylglycerol substrates non-specifically with a preference for long, unsaturated fatty acyl chains with the highest activity for triolein. Substrates with cis-9 unsaturation are preferred over the saturated triacylglycerols. Hydrolyzes a wide range of natural oils, especially olive oil, with relatively high activity. Capable of catalyzing synthesis of the flavor ester isoamyl acetate by esterification of isoamyl alcohol using acetic acid as an acyl donor. Degrades synthetic aliphatic polyesters, namely poly(1,4-butylene succinate) extended with 1,6-diisocyanatohexane (PBSc-D) and poly(epsilon-caprolactone) (PCL) plastics. Does not degrade poly(lactic acid) (PLA) nor aromatic poly(ethylene terephthalate) (PET), the most abundant polyester plastic in the world. The sequence is that of Cutinase from Amycolatopsis mediterranei (strain S699) (Nocardia mediterranei).